A 256-amino-acid chain; its full sequence is Gramicidin S biosynthesis protein GrsT (256 aa).

Residue S95 is part of the active site.

Belongs to the thioesterase family.

The protein operates within antibiotic biosynthesis; gramicidin S biosynthesis. Probable thioesterase involved in the biosynthesis of gramicidin S. This chain is Gramicidin S biosynthesis protein GrsT (grsT), found in Aneurinibacillus migulanus (Bacillus migulanus).